The chain runs to 316 residues: tRNA dimethylallyltransferase (316 aa).

Residue 17–24 (GPTASGKT) participates in ATP binding. 19–24 (TASGKT) serves as a coordination point for substrate. 3 interaction with substrate tRNA regions span residues 42-45 (DSAL), 166-170 (QRLSR), and 247-252 (RCVGYR).

It belongs to the IPP transferase family. Monomer. Mg(2+) serves as cofactor.

The catalysed reaction is adenosine(37) in tRNA + dimethylallyl diphosphate = N(6)-dimethylallyladenosine(37) in tRNA + diphosphate. Functionally, catalyzes the transfer of a dimethylallyl group onto the adenine at position 37 in tRNAs that read codons beginning with uridine, leading to the formation of N6-(dimethylallyl)adenosine (i(6)A). The chain is tRNA dimethylallyltransferase from Klebsiella pneumoniae (strain 342).